Consider the following 693-residue polypeptide: Glycine--tRNA ligase beta subunit (693 aa).

The protein belongs to the class-II aminoacyl-tRNA synthetase family. In terms of assembly, tetramer of two alpha and two beta subunits.

The protein localises to the cytoplasm. The catalysed reaction is tRNA(Gly) + glycine + ATP = glycyl-tRNA(Gly) + AMP + diphosphate. This chain is Glycine--tRNA ligase beta subunit, found in Ligilactobacillus salivarius (strain UCC118) (Lactobacillus salivarius).